Here is a 130-residue protein sequence, read N- to C-terminus: Small ribosomal subunit protein uS11 (130 aa).

The protein belongs to the universal ribosomal protein uS11 family. As to quaternary structure, part of the 30S ribosomal subunit. Interacts with proteins S7 and S18. Binds to IF-3.

Its function is as follows. Located on the platform of the 30S subunit, it bridges several disparate RNA helices of the 16S rRNA. Forms part of the Shine-Dalgarno cleft in the 70S ribosome. The polypeptide is Small ribosomal subunit protein uS11 (Gluconacetobacter diazotrophicus (strain ATCC 49037 / DSM 5601 / CCUG 37298 / CIP 103539 / LMG 7603 / PAl5)).